Consider the following 362-residue polypeptide: Heme A synthase (362 aa).

A run of 5 helical transmembrane segments spans residues 12-32 (AVKI…LVGG), 102-122 (VIGL…HLGG), 128-148 (LWLI…MVAS), 159-179 (ERLA…VWTL), and 198-218 (AAAL…VAGL). H262 contributes to the heme binding site. Transmembrane regions (helical) follow at residues 264-286 (MLAY…ARAG), 291-311 (GAVW…FTLL), and 314-334 (VPIG…MLGV). Residue H322 participates in heme binding.

It belongs to the COX15/CtaA family. Type 2 subfamily. As to quaternary structure, interacts with CtaB. The cofactor is heme b.

Its subcellular location is the cell membrane. It carries out the reaction Fe(II)-heme o + 2 A + H2O = Fe(II)-heme a + 2 AH2. The protein operates within porphyrin-containing compound metabolism; heme A biosynthesis; heme A from heme O: step 1/1. Its function is as follows. Catalyzes the conversion of heme O to heme A by two successive hydroxylations of the methyl group at C8. The first hydroxylation forms heme I, the second hydroxylation results in an unstable dihydroxymethyl group, which spontaneously dehydrates, resulting in the formyl group of heme A. This is Heme A synthase from Rhodopseudomonas palustris (strain BisA53).